Consider the following 81-residue polypeptide: Fungal defensin micasin (81 aa).

Positions 1–21 are cleaved as a signal peptide; the sequence is MQFTKLATILLVSLMGSAAIA. A propeptide spanning residues 22–43 is cleaved from the precursor; sequence APATNNAAVDAAADATPAVEKR. 3 disulfides stabilise this stretch: C47–C68, C54–C76, and C58–C78.

Belongs to the invertebrate defensin family.

The protein resides in the secreted. In terms of biological role, antibacterial peptide with potent activity against both Gram-positive and Gram-negative bacteria. May kill bacteria via an intracellular action mode to affect protein folding. Does not show effects on tested filamentous fungi or on the yeast S.cerevisiae. Does not act by destroying the membrane integrity, which is consistent with its nonamphiphilic architecture. Acts more rapidly than vancomycin, suggesting it does not act by inhibiting cell-wall biosynthesis. Does not cause hemolysis and has no cytotoxic effect on HEK cells. In vivo, is as efficient as vancomycin to protect mouse peritonitis models from S.aureus and P.aeruginosa infections. The sequence is that of Fungal defensin micasin from Arthroderma otae (Microsporum canis).